A 366-amino-acid chain; its full sequence is UDP-N-acetylglucosamine--N-acetylmuramyl-(pentapeptide) pyrophosphoryl-undecaprenol N-acetylglucosamine transferase (366 aa).

Residues 10 to 12, asparagine 124, arginine 166, serine 196, and glutamine 297 contribute to the UDP-N-acetyl-alpha-D-glucosamine site; that span reads TGG.

Belongs to the glycosyltransferase 28 family. MurG subfamily.

The protein resides in the cell membrane. It catalyses the reaction di-trans,octa-cis-undecaprenyl diphospho-N-acetyl-alpha-D-muramoyl-L-alanyl-D-glutamyl-meso-2,6-diaminopimeloyl-D-alanyl-D-alanine + UDP-N-acetyl-alpha-D-glucosamine = di-trans,octa-cis-undecaprenyl diphospho-[N-acetyl-alpha-D-glucosaminyl-(1-&gt;4)]-N-acetyl-alpha-D-muramoyl-L-alanyl-D-glutamyl-meso-2,6-diaminopimeloyl-D-alanyl-D-alanine + UDP + H(+). Its pathway is cell wall biogenesis; peptidoglycan biosynthesis. Its function is as follows. Cell wall formation. Catalyzes the transfer of a GlcNAc subunit on undecaprenyl-pyrophosphoryl-MurNAc-pentapeptide (lipid intermediate I) to form undecaprenyl-pyrophosphoryl-MurNAc-(pentapeptide)GlcNAc (lipid intermediate II). This Alkaliphilus metalliredigens (strain QYMF) protein is UDP-N-acetylglucosamine--N-acetylmuramyl-(pentapeptide) pyrophosphoryl-undecaprenol N-acetylglucosamine transferase.